A 273-amino-acid chain; its full sequence is Tetraspanin-8 (273 aa).

The Cytoplasmic segment spans residues Met-1–Asn-7. The chain crosses the membrane as a helical span at residues Leu-8–Ile-28. Over Trp-29–Pro-45 the chain is Extracellular. Residues Val-46–Cys-66 form a helical membrane-spanning segment. The Cytoplasmic segment spans residues Arg-67–Tyr-75. Residues Leu-76 to Val-96 form a helical membrane-spanning segment. At Thr-97–Ala-235 the chain is on the extracellular side. The N-linked (GlcNAc...) asparagine glycan is linked to Asn-192. The chain crosses the membrane as a helical span at residues Ile-236–Phe-256. Topologically, residues Arg-257–Pro-273 are cytoplasmic.

The protein belongs to the tetraspanin (TM4SF) family.

Its subcellular location is the membrane. Functionally, may be involved in the regulation of cell differentiation. The chain is Tetraspanin-8 (TET8) from Arabidopsis thaliana (Mouse-ear cress).